We begin with the raw amino-acid sequence, 345 residues long: Uroporphyrinogen decarboxylase (345 aa).

Residues 27-31 (RQAGR), phenylalanine 46, aspartate 76, tyrosine 152, serine 207, and histidine 321 contribute to the substrate site.

This sequence belongs to the uroporphyrinogen decarboxylase family. Homodimer.

It is found in the cytoplasm. The catalysed reaction is uroporphyrinogen III + 4 H(+) = coproporphyrinogen III + 4 CO2. It participates in porphyrin-containing compound metabolism; protoporphyrin-IX biosynthesis; coproporphyrinogen-III from 5-aminolevulinate: step 4/4. Its function is as follows. Catalyzes the decarboxylation of four acetate groups of uroporphyrinogen-III to yield coproporphyrinogen-III. This Staphylococcus aureus (strain bovine RF122 / ET3-1) protein is Uroporphyrinogen decarboxylase.